We begin with the raw amino-acid sequence, 212 residues long: phospholipase A2 inhibitor and Ly6/PLAUR domain-containing protein (212 aa).

The signal sequence occupies residues 1 to 24; that stretch reads MILFRRHRTFLLAFTLLCTLLGLG. The region spanning 27-117 is the UPAR/Ly6 domain; sequence LTCEVCKGSG…NSGSVPPPLN (91 aa). Disulfide bonds link C29/C53, C32/C39, C46/C74, C80/C101, C102/C107, C126/C152, and C145/C173.

Belongs to the CNF-like-inhibitor family.

The protein resides in the secreted. This Mus musculus (Mouse) protein is phospholipase A2 inhibitor and Ly6/PLAUR domain-containing protein (Pinlyp).